We begin with the raw amino-acid sequence, 77 residues long: Large ribosomal subunit protein uL24 (77 aa).

The disordered stretch occupies residues 42–61 (KKHQKPSQTNANGGVVESEG).

Belongs to the universal ribosomal protein uL24 family. As to quaternary structure, part of the 50S ribosomal subunit.

Functionally, one of two assembly initiator proteins, it binds directly to the 5'-end of the 23S rRNA, where it nucleates assembly of the 50S subunit. In terms of biological role, one of the proteins that surrounds the polypeptide exit tunnel on the outside of the subunit. The chain is Large ribosomal subunit protein uL24 from Lactobacillus helveticus (strain DPC 4571).